Here is a 510-residue protein sequence, read N- to C-terminus: UDP-N-acetylmuramoylalanine--D-glutamate ligase (510 aa).

Residue 138–144 (GTNGKTT) participates in ATP binding. The segment at 294-316 (FDEPAPAPRRKKDAPPPTRAGGR) is disordered.

This sequence belongs to the MurCDEF family.

The protein localises to the cytoplasm. It catalyses the reaction UDP-N-acetyl-alpha-D-muramoyl-L-alanine + D-glutamate + ATP = UDP-N-acetyl-alpha-D-muramoyl-L-alanyl-D-glutamate + ADP + phosphate + H(+). It participates in cell wall biogenesis; peptidoglycan biosynthesis. Its function is as follows. Cell wall formation. Catalyzes the addition of glutamate to the nucleotide precursor UDP-N-acetylmuramoyl-L-alanine (UMA). This is UDP-N-acetylmuramoylalanine--D-glutamate ligase from Bordetella pertussis (strain Tohama I / ATCC BAA-589 / NCTC 13251).